Reading from the N-terminus, the 158-residue chain is NAD(P)H-quinone oxidoreductase subunit J, chloroplastic (158 aa).

This sequence belongs to the complex I 30 kDa subunit family. As to quaternary structure, NDH is composed of at least 16 different subunits, 5 of which are encoded in the nucleus.

It is found in the plastid. It localises to the chloroplast thylakoid membrane. The catalysed reaction is a plastoquinone + NADH + (n+1) H(+)(in) = a plastoquinol + NAD(+) + n H(+)(out). The enzyme catalyses a plastoquinone + NADPH + (n+1) H(+)(in) = a plastoquinol + NADP(+) + n H(+)(out). NDH shuttles electrons from NAD(P)H:plastoquinone, via FMN and iron-sulfur (Fe-S) centers, to quinones in the photosynthetic chain and possibly in a chloroplast respiratory chain. The immediate electron acceptor for the enzyme in this species is believed to be plastoquinone. Couples the redox reaction to proton translocation, and thus conserves the redox energy in a proton gradient. The protein is NAD(P)H-quinone oxidoreductase subunit J, chloroplastic of Cryptomeria japonica (Japanese cedar).